The following is an 88-amino-acid chain: UPF0495 protein DEHA2C16280g (88 aa).

A helical transmembrane segment spans residues 25-47; that stretch reads YPLFAAMGVAVASGCFFTYRHFA.

Belongs to the UPF0495 family.

The protein resides in the membrane. This is UPF0495 protein DEHA2C16280g from Debaryomyces hansenii (strain ATCC 36239 / CBS 767 / BCRC 21394 / JCM 1990 / NBRC 0083 / IGC 2968) (Yeast).